The primary structure comprises 374 residues: UPF0496 protein At3g28270 (374 aa).

Residues 171–210 (KVLTTQFERIKKQQESLLEEVSETRKKIQDEISNLEKKTL) are a coiled coil. 2 helical membrane-spanning segments follow: residues 214–234 (VVFGAAFAIVAVASIALIATG) and 235–255 (VGAAAGFGALAAPLLAAGWAG). Positions 256–321 (VYTTLDKKKD…MLKLVDNAID (66 aa)) form a coiled coil.

It belongs to the UPF0496 family.

The protein resides in the membrane. The protein is UPF0496 protein At3g28270 of Arabidopsis thaliana (Mouse-ear cress).